The following is an 80-amino-acid chain: Protein Vpu (80 aa).

The Extracellular segment spans residues 1–6 (MYILGL). Residues 7 to 27 (GIGALVVTFIIAVIVWTIVYI) traverse the membrane as a helical segment. Residues 28-80 (EYKKLVRQKKIDRLIERIGERAEDSGNESDGDTEELSKLMEMGHLNLGYVADL) are Cytoplasmic-facing. A phosphoserine; by host CK2 mark is found at Ser-52 and Ser-56.

The protein belongs to the HIV-1 VPU protein family. In terms of assembly, homopentamer. Interacts with host CD4 and BRTC; these interactions induce proteasomal degradation of CD4. Interacts with host BST2; this interaction leads to the degradation of host BST2. Interacts with host FBXW11. Interacts with host AP1M1; this interaction plays a role in the mistrafficking and subsequent degradation of host BST2. Interacts with host RANBP2; this interaction allows Vpu to down-regulate host BLM sumoylation. Phosphorylated by host CK2. This phosphorylation is necessary for interaction with human BTRC and degradation of CD4.

It is found in the host membrane. Ion channel activity is inhibited by hexamethylene amiloride in vitro. Functionally, enhances virion budding by targeting host CD4 and Tetherin/BST2 to proteasome degradation. Degradation of CD4 prevents any unwanted premature interactions between viral Env and its host receptor CD4 in the endoplasmic reticulum. Degradation of antiretroviral protein Tetherin/BST2 is important for virion budding, as BST2 tethers new viral particles to the host cell membrane. Mechanistically, Vpu bridges either CD4 or BST2 to BTRC, a substrate recognition subunit of the Skp1/Cullin/F-box protein E3 ubiquitin ligase, induces their ubiquitination and subsequent proteasomal degradation. The alteration of the E3 ligase specificity by Vpu seems to promote the degradation of host IKBKB, leading to NF-kappa-B down-regulation and subsequent apoptosis. Acts as a viroporin that forms an oligomeric ion channel in membranes. Modulates the host DNA repair mechanisms to promote degradation of nuclear viral cDNA in cells that are already productively infected in order to suppress immune sensing and proviral hyper-integration (superinfection). Manipulates PML-NBs and modulates SUMOylation of host BLM protein thereby enhancing its DNA-end processing activity toward viral unintegrated linear DNA. Also inhibits RAD52-mediated homologous repair of viral cDNA, preventing the generation of dead-end circular forms of single copies of the long terminal repeat and permitting sustained nucleolytic attack. The sequence is that of Protein Vpu from Human immunodeficiency virus type 1 group M subtype H (isolate 90CF056) (HIV-1).